The chain runs to 351 residues: Snurportin-1 (351 aa).

Disordered regions lie at residues 1 to 66 and 294 to 322; these read MESS…QKGI and EQKK…EYDS. Over residues 8–42 the composition is skewed to basic and acidic residues; it reads LYKKGLDIGEQQKQRQKELLKQQKLRRQQEQDDYR. The span at 52–62 shows a compositional bias: basic residues; it reads PRKKSGKRSGH. Residues 274-330 adopt a coiled-coil conformation; that stretch reads VLQYMDAFEQKLAEHRRTLKEQKKKVNEQKEDPHTMEAEEDVESDEYDSLKRVLDQQ. Residues 294-310 are compositionally biased toward basic and acidic residues; it reads EQKKKVNEQKEDPHTME. Positions 311–320 are enriched in acidic residues; sequence AEEDVESDEY.

Belongs to the snurportin family. Interacts with components of the snRNP complex including SmB and Smn; these interactions are RNA-dependent. Interacts with importin-7 msk but not with importin subunit beta Fs(2)Ket; the interaction is RNA-dependent.

The protein localises to the nucleus. It localises to the cytoplasm. It is found in the U-body. Its subcellular location is the nucleus speckle. The protein resides in the cajal body. Its function is as follows. Functions as an U snRNP-specific nuclear import adapter. Involved in the trimethylguanosine (m3G)-cap-dependent nuclear import of U snRNPs. Binds specifically to the terminal m3G-cap U snRNAs. The sequence is that of Snurportin-1 from Drosophila melanogaster (Fruit fly).